The primary structure comprises 266 residues: 3-methyl-2-oxobutanoate hydroxymethyltransferase (266 aa).

The Mg(2+) site is built by D45 and D84. 3-methyl-2-oxobutanoate is bound by residues 45–46 (DS), D84, and K112. Residue E114 participates in Mg(2+) binding. E181 functions as the Proton acceptor in the catalytic mechanism.

It belongs to the PanB family. As to quaternary structure, homodecamer; pentamer of dimers. It depends on Mg(2+) as a cofactor.

The protein resides in the cytoplasm. It carries out the reaction 3-methyl-2-oxobutanoate + (6R)-5,10-methylene-5,6,7,8-tetrahydrofolate + H2O = 2-dehydropantoate + (6S)-5,6,7,8-tetrahydrofolate. The protein operates within cofactor biosynthesis; (R)-pantothenate biosynthesis; (R)-pantoate from 3-methyl-2-oxobutanoate: step 1/2. Functionally, catalyzes the reversible reaction in which hydroxymethyl group from 5,10-methylenetetrahydrofolate is transferred onto alpha-ketoisovalerate to form ketopantoate. The polypeptide is 3-methyl-2-oxobutanoate hydroxymethyltransferase (Stutzerimonas stutzeri (strain A1501) (Pseudomonas stutzeri)).